The following is a 923-amino-acid chain: MGSGAGELGRAERLPVLFLFLLSLFCPALCEQIRYRIPEEMPKGSVVGNLATDLGFSVQELPTRKLRVSSEKPYFTVSAESGELLVSSRLDREEICGKKPACALEFEAVAENPLNFYHVNVEIEDINDHTPKFTQNSFELQISESAQPGTRFILGSAHDADIGSNTLQNYQLSPSDHFSLINKEKSDGSKYPEMVLKTPLDREKQKSYHLTLTALDFGAPPLSSTAQIHVLVTDANDNAPVFSQDIYRVSLSENVYPGTTVLQVTATDQDEGVNAEITFSFSEASQITQFDLNSNTGEITVLNTLDFEEVKEYSIVLEARDGGGMIAQCTVEVEVIDENDNAPEVIFQSLPNLIMEDAELGTHIALLKVRDKDSRHNGEVTCKLEGDVPFKILTSSRNTYKLVTDAVLDREQNPEYNITVTARDRGKPPLSSSSSITLHIGDVNDNAPVFSQSSYIVHVAENNPPGASISQVSASDPDLGPNGQVSYCIIASDLEQRELSSYVSISAESGVVFAQRAFDHEQLRAFELTLQARDQGSPALSANVSLRVLVDDRNDNAPRVLYPALGPDGSALFDMVPRAAEPGYLVTKVVAVDADSGHNAWLSYHVLQASEPGLFSLGLRTGEVRTARALGDRDAVRQRLLVAVRDGGQPPLSATATLHLVFADSLQEVLPDITDRPDPSDLEAELQFYLVVALALISVLFLVAMILAIALRLRRSSSPASWSCFQPGLCVKSESVVPPNYSEGTLPYSYNLCVAHTGKTEFNFLKCNEQLSSGQDILCGDSSGALFPLCNSSELTSHQQAPPNTDWRFSQAQRPGTSGSQNGDDTGTWPNNQFDTEMLQAMILASASEAADGSSTLGGGAGTMGLSARYGPQFTLQHVPDYRQNVYIPGSNATLTNAAGKRDGKAPAGGNGNKKKSGKKEKK.

The N-terminal stretch at 1 to 30 (MGSGAGELGRAERLPVLFLFLLSLFCPALC) is a signal peptide. Cadherin domains follow at residues 31-133 (EQIR…TPKF), 134-242 (TQNS…APVF), 243-345 (SQDI…APEV), 346-450 (IFQS…APVF), 451-560 (SQSS…APRV), and 568-673 (DGSA…LPDI). Over 31–689 (EQIRYRIPEE…SDLEAELQFY (659 aa)) the chain is Extracellular. 2 N-linked (GlcNAc...) asparagine glycosylation sites follow: Asn417 and Asn543. A helical membrane pass occupies residues 690 to 710 (LVVALALISVLFLVAMILAIA). Residues 711–923 (LRLRRSSSPA…KKKSGKKEKK (213 aa)) are Cytoplasmic-facing. 2 disordered regions span residues 797–832 (SHQQ…WPNN) and 893–923 (ATLT…KEKK). The segment covering 913–923 (NKKKSGKKEKK) has biased composition (basic residues).

The protein resides in the cell membrane. Its function is as follows. Potential calcium-dependent cell-adhesion protein. May be involved in the establishment and maintenance of specific neuronal connections in the brain. The protein is Protocadherin gamma-B4 (PCDHGB4) of Pan troglodytes (Chimpanzee).